Reading from the N-terminus, the 261-residue chain is Cytochrome c oxidase subunit 3 (261 aa).

6 consecutive transmembrane segments (helical) span residues 31–51 (LVLWFHTGNIILLFTGLLLLI), 82–102 (PMILFITSEVCFFFAFFWAFF), 126–146 (PFLVPLLNTAVLLSSGVTITW), 159–179 (AIQALFLTVVLGIYFTILQAW), 197–217 (FFVATGFHGLHVIIGTTFLLV), and 239–259 (AWYWHFVDVVWLFLYVCIYWW).

This sequence belongs to the cytochrome c oxidase subunit 3 family. In terms of assembly, component of the cytochrome c oxidase (complex IV, CIV), a multisubunit enzyme composed of a catalytic core of 3 subunits and several supernumerary subunits. The complex exists as a monomer or a dimer and forms supercomplexes (SCs) in the inner mitochondrial membrane with ubiquinol-cytochrome c oxidoreductase (cytochrome b-c1 complex, complex III, CIII).

It localises to the mitochondrion inner membrane. The catalysed reaction is 4 Fe(II)-[cytochrome c] + O2 + 8 H(+)(in) = 4 Fe(III)-[cytochrome c] + 2 H2O + 4 H(+)(out). Its function is as follows. Component of the cytochrome c oxidase, the last enzyme in the mitochondrial electron transport chain which drives oxidative phosphorylation. The respiratory chain contains 3 multisubunit complexes succinate dehydrogenase (complex II, CII), ubiquinol-cytochrome c oxidoreductase (cytochrome b-c1 complex, complex III, CIII) and cytochrome c oxidase (complex IV, CIV), that cooperate to transfer electrons derived from NADH and succinate to molecular oxygen, creating an electrochemical gradient over the inner membrane that drives transmembrane transport and the ATP synthase. Cytochrome c oxidase is the component of the respiratory chain that catalyzes the reduction of oxygen to water. Electrons originating from reduced cytochrome c in the intermembrane space (IMS) are transferred via the dinuclear copper A center (CU(A)) of subunit 2 and heme A of subunit 1 to the active site in subunit 1, a binuclear center (BNC) formed by heme A3 and copper B (CU(B)). The BNC reduces molecular oxygen to 2 water molecules using 4 electrons from cytochrome c in the IMS and 4 protons from the mitochondrial matrix. This Paracentrotus lividus (Common sea urchin) protein is Cytochrome c oxidase subunit 3 (COIII).